The following is a 229-amino-acid chain: Putative N-acetylmannosamine-6-phosphate 2-epimerase (229 aa).

The protein belongs to the NanE family.

It catalyses the reaction an N-acyl-D-glucosamine 6-phosphate = an N-acyl-D-mannosamine 6-phosphate. It participates in amino-sugar metabolism; N-acetylneuraminate degradation; D-fructose 6-phosphate from N-acetylneuraminate: step 3/5. In terms of biological role, converts N-acetylmannosamine-6-phosphate (ManNAc-6-P) to N-acetylglucosamine-6-phosphate (GlcNAc-6-P). This is Putative N-acetylmannosamine-6-phosphate 2-epimerase from Shigella flexneri serotype 5b (strain 8401).